Reading from the N-terminus, the 400-residue chain is 1-deoxy-D-xylulose 5-phosphate reductoisomerase (400 aa).

5 residues coordinate NADPH: threonine 17, glycine 18, serine 19, isoleucine 20, and asparagine 131. Lysine 132 contacts 1-deoxy-D-xylulose 5-phosphate. Position 133 (glutamate 133) interacts with NADPH. Aspartate 157 contacts Mn(2+). The 1-deoxy-D-xylulose 5-phosphate site is built by serine 158, glutamate 159, serine 188, and histidine 211. Residue glutamate 159 participates in Mn(2+) binding. Residue glycine 217 participates in NADPH binding. Residues serine 224, asparagine 229, lysine 230, and glutamate 233 each coordinate 1-deoxy-D-xylulose 5-phosphate. Glutamate 233 contributes to the Mn(2+) binding site.

It belongs to the DXR family. Mg(2+) serves as cofactor. The cofactor is Mn(2+).

It carries out the reaction 2-C-methyl-D-erythritol 4-phosphate + NADP(+) = 1-deoxy-D-xylulose 5-phosphate + NADPH + H(+). It functions in the pathway isoprenoid biosynthesis; isopentenyl diphosphate biosynthesis via DXP pathway; isopentenyl diphosphate from 1-deoxy-D-xylulose 5-phosphate: step 1/6. Functionally, catalyzes the NADPH-dependent rearrangement and reduction of 1-deoxy-D-xylulose-5-phosphate (DXP) to 2-C-methyl-D-erythritol 4-phosphate (MEP). The polypeptide is 1-deoxy-D-xylulose 5-phosphate reductoisomerase (Pseudomonas putida (strain ATCC 47054 / DSM 6125 / CFBP 8728 / NCIMB 11950 / KT2440)).